The following is a 214-amino-acid chain: Cytochrome b (214 aa).

A run of 4 helical transmembrane segments spans residues 31 to 51 (FGSMLLACLMIQIITGFFLAI), 75 to 96 (WIMQNTHAISASLFFICIYIHI), 111 to 131 (WLSGTTLLIILMATAFFGYVL), and 176 to 196 (FFALHFILPFIIISMSSIHIL). 2 residues coordinate heme b: His81 and His95. Heme b is bound by residues His180 and His194. His199 contacts a ubiquinone.

This sequence belongs to the cytochrome b family. The cytochrome bc1 complex contains 3 respiratory subunits (MT-CYB, CYC1 and UQCRFS1), 2 core proteins (UQCRC1 and UQCRC2) and probably 6 low-molecular weight proteins. Heme b is required as a cofactor.

The protein localises to the mitochondrion inner membrane. Functionally, component of the ubiquinol-cytochrome c reductase complex (complex III or cytochrome b-c1 complex) that is part of the mitochondrial respiratory chain. The b-c1 complex mediates electron transfer from ubiquinol to cytochrome c. Contributes to the generation of a proton gradient across the mitochondrial membrane that is then used for ATP synthesis. This is Cytochrome b (MT-CYB) from Bothrops atrox (Barba amarilla).